A 1096-amino-acid chain; its full sequence is Adenylate-forming reductase Nps9 (1096 aa).

Residues 39–352 form an adenylation (A) domain region; that stretch reads DDTLTEISFL…TTEFGAPTQL (314 aa). Residues H236, 339-340, T344, and 425-428 contribute to the AMP site; these read VQ and IIGR. The Carrier domain maps to 569–656; the sequence is EWTVSTLEHW…LLADRVAKIA (88 aa). An O-(pantetheine 4'-phosphoryl)serine modification is found at S605. Residues 716-952 are reductase (R) domain; it reads LTGSTGGLGS…MPAEKVSAAI (237 aa). NADP(+)-binding positions include 720-723, 807-809, Y880, and K884; these read TGGL and SAW.

The protein belongs to the adenylate-forming reductase family.

Its function is as follows. Adenylate-forming reductase, a natural product biosynthesis enzyme that resembles non-ribosomal peptide synthetases, yet serves to modify one substrate, rather than to condense two or more building blocks. The A-domain preferentially accepts L-threonine as substrate. The natural product of the enzyme is not yet known. This chain is Adenylate-forming reductase Nps9, found in Serpula lacrymans var. lacrymans (strain S7.9) (Dry rot fungus).